Reading from the N-terminus, the 643-residue chain is Phosphatidylinositol-3,5-bisphosphate 3-phosphatase MTMR2 (643 aa).

Positions 1–52 (MEKSSSCESLGAQLPAARLPSEDSLSSASTSHSENSVHTKSASAISSDSIST) are disordered. 2 positions are modified to phosphoserine: serine 6 and serine 9. The segment covering 23–40 (DSLSSASTSHSENSVHTK) has biased composition (polar residues). Positions 41–52 (SASAISSDSIST) are enriched in low complexity. Position 58 is a phosphoserine (serine 58). A GRAM domain is found at 68-139 (NKLAEMEEPA…GVISRVEKIG (72 aa)). The 376-residue stretch at 205-580 (GWKLYDPLLE…RHLELWVGYY (376 aa)) folds into the Myotubularin phosphatase domain. The a 1,2-diacyl-sn-glycero-3-phospho-(1D-myo-inositol-3,5-bisphosphate) site is built by asparagine 330, asparagine 355, and isoleucine 356. Positions 330, 355, and 356 each coordinate a 1,2-diacyl-sn-glycero-3-phospho-(1D-myo-inositol-3-phosphate). Cysteine 417 acts as the Phosphocysteine intermediate in catalysis. The a 1,2-diacyl-sn-glycero-3-phospho-(1D-myo-inositol-3,5-bisphosphate) site is built by serine 418, aspartate 419, glycine 420, tryptophan 421, aspartate 422, arginine 423, arginine 459, and arginine 463. A 1,2-diacyl-sn-glycero-3-phospho-(1D-myo-inositol-3-phosphate) is bound by residues serine 418, aspartate 419, glycine 420, tryptophan 421, aspartate 422, and arginine 423. Position 463 (arginine 463) interacts with a 1,2-diacyl-sn-glycero-3-phospho-(1D-myo-inositol-3-phosphate). The stretch at 593–627 (IHSRYKELLAKRAELQRKVEELQREISNRSTSSSE) forms a coiled coil. The tract at residues 614–643 (LQREISNRSTSSSERASSPAQCVTPVQTVV) is disordered. The span at 620–631 (NRSTSSSERASS) shows a compositional bias: low complexity. Positions 632–643 (PAQCVTPVQTVV) are enriched in polar residues.

The protein belongs to the protein-tyrosine phosphatase family. Non-receptor class myotubularin subfamily. As to quaternary structure, homodimer (via coiled-coil domain). Heterotetramer consisting of one MTMR2 dimer and one SBF2/MTMR13 dimer; specifically in peripheral nerves stabilizes SBF2/MTMR13 at the membranes and increases MTMR2 catalytic activity towards phosphatidylinositol 3,5-bisphosphate and to a lesser extent towards phosphatidylinositol 3-phosphate. Heterodimer with SBF1/MTMR5; acts as an adapter for the phosphatase MTMR2 to regulate MTMR2 catalytic activity and subcellular location. Heterodimer with MTMR12. Phosphorylation at Ser-58 decreases MTMR2 localization to endocytic vesicular structures. In terms of tissue distribution, expressed in sciatic nerve and in Schwann cells (at protein level). Detected in adult dorsal root ganglia, neurons of the central nervous system, motor neurons, cell soma and neurites of sensory neurons, olfactory bulb, cerebellum and hippocampus.

The protein resides in the cytoplasm. Its subcellular location is the early endosome membrane. It localises to the perinuclear region. It is found in the cell projection. The protein localises to the axon. The protein resides in the endosome membrane. It carries out the reaction a 1,2-diacyl-sn-glycero-3-phospho-(1D-myo-inositol-3,5-bisphosphate) + H2O = a 1,2-diacyl-sn-glycero-3-phospho-(1D-myo-inositol-5-phosphate) + phosphate. The enzyme catalyses a 1,2-diacyl-sn-glycero-3-phospho-(1D-myo-inositol-3-phosphate) + H2O = a 1,2-diacyl-sn-glycero-3-phospho-(1D-myo-inositol) + phosphate. It catalyses the reaction 1,2-dioctanoyl-sn-glycero-3-phospho-(1-D-myo-inositol-3-phosphate) + H2O = 1,2-dioctanoyl-sn-glycero-3-phospho-(1D-myo-inositol) + phosphate. The catalysed reaction is 1,2-dioctanoyl-sn-glycero-3-phospho-(1D-myo-inositol-3,5-bisphosphate) + H2O = 1,2-dioctanoyl-sn-glycero-3-phospho-(1D-myo-inositol-5-phosphate) + phosphate. Lipid phosphatase that specifically dephosphorylates the D-3 position of phosphatidylinositol 3-phosphate and phosphatidylinositol 3,5-bisphosphate, generating phosphatidylinositol and phosphatidylinositol 5-phosphate. Regulates the level of these phosphoinositides critical for various biological processes including autophagy initiation and autophagosome maturation. The protein is Phosphatidylinositol-3,5-bisphosphate 3-phosphatase MTMR2 of Mus musculus (Mouse).